Reading from the N-terminus, the 307-residue chain is Acyl transferase (307 aa).

Active-site charge relay system residues include Ser-116, Asp-213, and His-243.

It belongs to the LuxD family.

It functions in the pathway lipid metabolism; fatty acid reduction for biolumincescence. Its function is as follows. Acyl transferase is part of the fatty acid reductase system required for aldehyde biosynthesis; it produces fatty acids for the luminescent reaction. This Aliivibrio fischeri (Vibrio fischeri) protein is Acyl transferase.